We begin with the raw amino-acid sequence, 396 residues long: Elongation factor Tu (396 aa).

In terms of domain architecture, tr-type G spans 10 to 206 (KPHCNIGTIG…QVDAYIPQPE (197 aa)). The G1 stretch occupies residues 19–26 (GHVDHGKT). 19–26 (GHVDHGKT) is a binding site for GTP. Mg(2+) is bound at residue T26. The segment at 60-64 (GITIS) is G2. Residues 81–84 (DCPG) are G3. GTP-binding positions include 81-85 (DCPGH) and 136-139 (NKCD). The G4 stretch occupies residues 136-139 (NKCD). A G5 region spans residues 174 to 176 (SAL).

The protein belongs to the TRAFAC class translation factor GTPase superfamily. Classic translation factor GTPase family. EF-Tu/EF-1A subfamily. As to quaternary structure, monomer.

The protein resides in the cytoplasm. It catalyses the reaction GTP + H2O = GDP + phosphate + H(+). In terms of biological role, GTP hydrolase that promotes the GTP-dependent binding of aminoacyl-tRNA to the A-site of ribosomes during protein biosynthesis. The polypeptide is Elongation factor Tu (Rhodopseudomonas palustris (strain ATCC BAA-98 / CGA009)).